The sequence spans 359 residues: Replication-associated protein (359 aa).

The CRESS-DNA virus Rep endonuclease domain occupies 8–116 (QINAKHYFLT…DGDVLEWGTF (109 aa)). The short motif at 15–18 (FLTF) is the RCR-1 element. Positions 49, 57, and 59 each coordinate a divalent metal cation. An RCR-2 motif is present at residues 57 to 59 (HLH). The active-site For DNA cleavage activity is the Y103. The RCR-3 signature appears at 103 to 106 (YIDK). D107 is a binding site for a divalent metal cation. A binding to RBR1 region spans residues 143–153 (KSEALDVIKEL). Positions 156-176 (RDYILHFHNINSNLNMVFQVP) are oligomerization. Position 221 to 228 (221 to 228 (GDSRTGKT)) interacts with ATP.

The protein belongs to the geminiviridae Rep protein family. Homooligomer. Interacts with the replication enhancer protein (REn). Interacts with host retinoblastoma-related protein 1 (RBR1), and may thereby induce the transcription of host replicative enzymes even if the cell is not dividing anymore. Interacts with host PCNA. Interacts with host SCE1 protein. It depends on Mg(2+) as a cofactor. Requires Mn(2+) as cofactor.

The protein localises to the host nucleus. Its function is as follows. Essential for the replication of viral ssDNA. The closed circular ssDNA genome is first converted to a superhelical dsDNA. Rep binds a specific region at the genome origin of replication. It introduces an endonucleolytic nick within the conserved sequence 5'-TAATATTAC-3' in the intergenic region of the genome present in all geminiviruses, thereby initiating the rolling circle replication (RCR). Following cleavage, binds covalently to the 5'-phosphate of DNA as a tyrosyl ester. The cleavage gives rise to a free 3'-OH that serves as a primer for the cellular DNA polymerase. The polymerase synthesizes the (+) strand DNA by rolling circle mechanism. After one round of replication, a Rep-catalyzed nucleotidyl transfer reaction releases a circular single-stranded virus genome, thereby terminating the replication. Displays origin-specific DNA cleavage, nucleotidyl transferase, ATPase and helicase activities. The polypeptide is Replication-associated protein (Solanum lycopersicum (Tomato)).